A 183-amino-acid chain; its full sequence is Adenine phosphoribosyltransferase (183 aa).

This sequence belongs to the purine/pyrimidine phosphoribosyltransferase family. As to quaternary structure, homodimer.

It localises to the cytoplasm. The enzyme catalyses AMP + diphosphate = 5-phospho-alpha-D-ribose 1-diphosphate + adenine. The protein operates within purine metabolism; AMP biosynthesis via salvage pathway; AMP from adenine: step 1/1. Functionally, catalyzes a salvage reaction resulting in the formation of AMP, that is energically less costly than de novo synthesis. The protein is Adenine phosphoribosyltransferase of Edwardsiella ictaluri (strain 93-146).